The primary structure comprises 1745 residues: Tight junction protein 1 (1745 aa).

A PDZ 1 domain is found at 23 to 110 (TVTLHRAPGF…NAKITIRRKK (88 aa)). Residues 102–112 (AKITIRRKKKV) are compositionally biased toward basic residues. The interval 102 to 189 (AKITIRRKKK…QPAKPTKVTL (88 aa)) is disordered. The span at 123–136 (PVSDNEDDSYDEEV) shows a compositional bias: acidic residues. Ser-125 is modified (phosphoserine). The residue at position 132 (Tyr-132) is a Phosphotyrosine. Positions 149–175 (RRSEKSWARDRSASRERSLSPRSDRRS) are enriched in basic and acidic residues. Residues Ser-175, Ser-178, and Ser-179 each carry the phosphoserine modification. At Thr-185 the chain carries Phosphothreonine. Positions 186–264 (KVTLVKSRKN…KLKMVVQRDE (79 aa)) constitute a PDZ 2 domain. A phosphoserine mark is found at Ser-212 and Ser-241. At Thr-267 the chain carries Phosphothreonine. Residues Ser-275, Ser-277, Ser-280, Ser-284, Ser-290, Ser-294, Ser-297, Ser-300, Ser-323, Ser-329, Ser-334, Ser-337, and Ser-353 each carry the phosphoserine modification. The disordered stretch occupies residues 296 to 364 (ASDHSGRSHD…PVKHVDDHPP (69 aa)). Basic and acidic residues predominate over residues 299–308 (HSGRSHDRPP). Residues 325-338 (HSTQSPQQPSNGSL) show a composition bias toward polar residues. The residue at position 354 (Thr-354) is a Phosphothreonine. In terms of domain architecture, PDZ 3 spans 421–502 (SMKLVKFRKG…GEEVTILAQK (82 aa)). Residues 516-584 (GDSFYIRTHF…PNKNRAEQLA (69 aa)) enclose the SH3 domain. Positions 610 to 791 (SKRNLRKSRE…WYGALKEAIQ (182 aa)) constitute a Guanylate kinase-like domain. Ser-617 and Ser-622 each carry phosphoserine. Positions 633 to 876 (YERVVLREAG…GTPPESAITR (244 aa)) are occludin (OCLN)-binding region. Thr-809 bears the Phosphothreonine mark. 2 positions are modified to phosphoserine: Ser-810 and Ser-821. Tyr-822 is modified (phosphotyrosine). Phosphoserine occurs at positions 824, 828, and 837. Disordered regions lie at residues 825 to 944 (APGS…SASA) and 956 to 1042 (LEEP…YEPQ). Residues Thr-846, Thr-848, Thr-854, Thr-861, and Thr-868 each carry the phosphothreonine modification. Positions 879-892 (EPVREDSSGMHHEN) are enriched in basic and acidic residues. The segment covering 893–906 (QTYPPYSPQAQPQA) has biased composition (low complexity). Ser-912 carries the post-translational modification Phosphoserine. Over residues 998 to 1014 (DPAKVYRKEPYSEEMMR) the composition is skewed to basic and acidic residues. The residue at position 1071 (Ser-1071) is a Phosphoserine. Residues 1090–1586 (QWSYYDDKQP…STQPPEFDSG (497 aa)) form a disordered region. A compositionally biased stretch (basic and acidic residues) spans 1106–1124 (ENQHPRDLDSRQHPEEASE). Position 1138 is a phosphoserine (Ser-1138). Residues Tyr-1139 and Tyr-1164 each carry the phosphotyrosine modification. The interval 1150-1370 (RTSTLRHEEQ…FDRRSFESKP (221 aa)) is actin-binding region (ABR). 2 stretches are compositionally biased toward basic and acidic residues: residues 1268–1285 (KMFE…KDVN) and 1335–1346 (PPEDIVRSNHYD). Position 1353 is a phosphotyrosine (Tyr-1353). Ser-1365 is modified (phosphoserine). A compositionally biased stretch (low complexity) spans 1388–1399 (SQSQPNFSSYSS). Positions 1401 to 1418 (GKPETDAVDRSFSEKRYD) are enriched in basic and acidic residues. Ser-1411 bears the Phosphoserine mark. The span at 1431 to 1445 (SQYSQPAPPLSSSSL) shows a compositional bias: low complexity. 2 stretches are compositionally biased toward polar residues: residues 1455–1468 (EGNS…NSYM) and 1510–1519 (AEQTQKTITP). A compositionally biased stretch (basic and acidic residues) spans 1535–1544 (PFERKFESPK). Ser-1542 is subject to Phosphoserine. Polar residues predominate over residues 1561–1580 (SSKTPTSPKTLMKAHSSTQP). Ser-1614 is modified (phosphoserine). One can recognise a ZU5 domain in the interval 1631-1745 (ATARGIFNSN…NCVSVLIDHF (115 aa)).

This sequence belongs to the MAGUK family. Homodimer. Forms heterodimers TJP3. Forms a heterodimer (via PDZ2 domain) with TJP2/ZO2 (via PDZ2 domain). Interacts with OCLN, CALM, claudins, CGN/cingulin, CXADR, GJD3 and UBN1. Interacts (via ZU5 domain) with CDC42BPB. Interacts (via PDZ domain) with GJA1. Interacts (via PDZ domains) with ANKRD2. Interacts with POPDC1 (via the C-terminus cytoplasmic tail). Interacts with GJA12 and KIRREL1. Interacts with HSPA4. Interacts (via ZU5 domain) with MYZAP. Interacts with DLL1. Interacts with USP53 (via the C-terminal region). Interacts with DNMBP (via C-terminal domain); required for the apical cell-cell junction localization of DNMBP. Interacts with SPEF1. Interacts (via N-terminus) with CTNNA1. Interacts with CLDN18. Interacts with CLDN16 (via TRV motif); this is a prerequisite for anchoring of CLDN16 at the tight junction. Interacts with PKP1; the interaction facilitates TJP1/ZO-1 localization to the plasma membrane. Interacts with PATJ (via PDZ1-6 domains); the interaction is required for attachment and extension of TJP1/ZO1 condensates along the apical cell interface. Post-translationally, phosphorylated at tyrosine redidues in response to epidermal growth factor (EGF). This response is dependent on an intact actin microfilament system. Dephosphorylated by PTPRJ. In terms of tissue distribution, expressed between ameloblasts, at ameloblast-ameloblast junctions and in the stratum intermedium during pre-secretory and secretory stages of tooth development (at protein level).

The protein resides in the cell membrane. The protein localises to the cell junction. Its subcellular location is the tight junction. It localises to the gap junction. It is found in the cytoplasm. The protein resides in the myofibril. The protein localises to the sarcomere. Its subcellular location is the i band. In terms of biological role, tjp1, TjpP2, and Tjp3 are closely related scaffolding proteins that link tight junction (TJ) transmembrane proteins such as claudins, junctional adhesion molecules, and occludin to the actin cytoskeleton. Forms a multistranded TJP1/ZO1 condensate which elongates to form a tight junction belt, the belt is anchored at the apical cell membrane via interaction with PATJ. The tight junction acts to limit movement of substances through the paracellular space and as a boundary between the compositionally distinct apical and basolateral plasma membrane domains of epithelial and endothelial cells. Necessary for lumenogenesis, and particularly efficient epithelial polarization and barrier formation. Plays a role in the regulation of cell migration by targeting Cdc42bpb to the leading edge of migrating cells. Plays an important role in podosome formation and associated function, thus regulating cell adhesion and matrix remodeling. With Tjp2 and TJjp3, participates in the junctional retention and stability of the transcription factor Dbpa, but is not involved in its shuttling to the nucleus. May play a role in mediating cell morphology changes during ameloblast differentiation via its role in tight junctions. The chain is Tight junction protein 1 from Mus musculus (Mouse).